A 259-amino-acid chain; its full sequence is Proteasome subunit alpha (259 aa).

The protein belongs to the peptidase T1A family. As to quaternary structure, the 20S proteasome core is composed of 14 alpha and 14 beta subunits that assemble into four stacked heptameric rings, resulting in a barrel-shaped structure. The two inner rings, each composed of seven catalytic beta subunits, are sandwiched by two outer rings, each composed of seven alpha subunits. The catalytic chamber with the active sites is on the inside of the barrel. Has a gated structure, the ends of the cylinder being occluded by the N-termini of the alpha-subunits. Is capped at one or both ends by the proteasome regulatory ATPase, PAN.

The protein localises to the cytoplasm. With respect to regulation, the formation of the proteasomal ATPase PAN-20S proteasome complex, via the docking of the C-termini of PAN into the intersubunit pockets in the alpha-rings, triggers opening of the gate for substrate entry. Interconversion between the open-gate and close-gate conformations leads to a dynamic regulation of the 20S proteasome proteolysis activity. Component of the proteasome core, a large protease complex with broad specificity involved in protein degradation. The chain is Proteasome subunit alpha from Methanococcus vannielii (strain ATCC 35089 / DSM 1224 / JCM 13029 / OCM 148 / SB).